The sequence spans 154 residues: Lipoprotein signal peptidase (154 aa).

Helical transmembrane passes span 55 to 75 and 84 to 104; these read GHMW…IYIM and LFSI…IDRI. Active-site residues include Asp111 and Asp129. Residues 124–144 traverse the membrane as a helical segment; the sequence is IFNVADAALSVGVVLMLVYVF.

It belongs to the peptidase A8 family.

The protein resides in the cell membrane. The catalysed reaction is Release of signal peptides from bacterial membrane prolipoproteins. Hydrolyzes -Xaa-Yaa-Zaa-|-(S,diacylglyceryl)Cys-, in which Xaa is hydrophobic (preferably Leu), and Yaa (Ala or Ser) and Zaa (Gly or Ala) have small, neutral side chains.. Its pathway is protein modification; lipoprotein biosynthesis (signal peptide cleavage). This protein specifically catalyzes the removal of signal peptides from prolipoproteins. This chain is Lipoprotein signal peptidase, found in Listeria innocua serovar 6a (strain ATCC BAA-680 / CLIP 11262).